A 339-amino-acid polypeptide reads, in one-letter code: Uroporphyrinogen decarboxylase (339 aa).

Residues 21-25 (RQAGR), Phe40, Asp71, Tyr147, Ser202, and His315 contribute to the substrate site.

The protein belongs to the uroporphyrinogen decarboxylase family. As to quaternary structure, homodimer.

It localises to the cytoplasm. It carries out the reaction uroporphyrinogen III + 4 H(+) = coproporphyrinogen III + 4 CO2. It functions in the pathway porphyrin-containing compound metabolism; protoporphyrin-IX biosynthesis; coproporphyrinogen-III from 5-aminolevulinate: step 4/4. Catalyzes the decarboxylation of four acetate groups of uroporphyrinogen-III to yield coproporphyrinogen-III. The protein is Uroporphyrinogen decarboxylase of Helicobacter pylori (strain ATCC 700392 / 26695) (Campylobacter pylori).